Consider the following 209-residue polypeptide: Imidazole glycerol phosphate synthase subunit HisH (209 aa).

Residues 1-205 (MIAIIDYGMG…KGVVKQWKSS (205 aa)) enclose the Glutamine amidotransferase type-1 domain. The Nucleophile role is filled by cysteine 79. Active-site residues include histidine 180 and glutamate 182.

Heterodimer of HisH and HisF.

Its subcellular location is the cytoplasm. It catalyses the reaction 5-[(5-phospho-1-deoxy-D-ribulos-1-ylimino)methylamino]-1-(5-phospho-beta-D-ribosyl)imidazole-4-carboxamide + L-glutamine = D-erythro-1-(imidazol-4-yl)glycerol 3-phosphate + 5-amino-1-(5-phospho-beta-D-ribosyl)imidazole-4-carboxamide + L-glutamate + H(+). The catalysed reaction is L-glutamine + H2O = L-glutamate + NH4(+). It participates in amino-acid biosynthesis; L-histidine biosynthesis; L-histidine from 5-phospho-alpha-D-ribose 1-diphosphate: step 5/9. IGPS catalyzes the conversion of PRFAR and glutamine to IGP, AICAR and glutamate. The HisH subunit catalyzes the hydrolysis of glutamine to glutamate and ammonia as part of the synthesis of IGP and AICAR. The resulting ammonia molecule is channeled to the active site of HisF. The chain is Imidazole glycerol phosphate synthase subunit HisH from Bacillus cytotoxicus (strain DSM 22905 / CIP 110041 / 391-98 / NVH 391-98).